A 336-amino-acid chain; its full sequence is Phenylalanine--tRNA ligase alpha subunit (336 aa).

Glutamate 259 contacts Mg(2+).

This sequence belongs to the class-II aminoacyl-tRNA synthetase family. Phe-tRNA synthetase alpha subunit type 1 subfamily. As to quaternary structure, tetramer of two alpha and two beta subunits. Requires Mg(2+) as cofactor.

It is found in the cytoplasm. The enzyme catalyses tRNA(Phe) + L-phenylalanine + ATP = L-phenylalanyl-tRNA(Phe) + AMP + diphosphate + H(+). This is Phenylalanine--tRNA ligase alpha subunit from Tropheryma whipplei (strain TW08/27) (Whipple's bacillus).